The primary structure comprises 274 residues: UPF0173 metal-dependent hydrolase Adeh_1068 (274 aa).

It belongs to the UPF0173 family.

The protein is UPF0173 metal-dependent hydrolase Adeh_1068 of Anaeromyxobacter dehalogenans (strain 2CP-C).